Consider the following 127-residue polypeptide: Ribonuclease P protein component (127 aa).

This sequence belongs to the RnpA family. As to quaternary structure, consists of a catalytic RNA component (M1 or rnpB) and a protein subunit.

The enzyme catalyses Endonucleolytic cleavage of RNA, removing 5'-extranucleotides from tRNA precursor.. In terms of biological role, RNaseP catalyzes the removal of the 5'-leader sequence from pre-tRNA to produce the mature 5'-terminus. It can also cleave other RNA substrates such as 4.5S RNA. The protein component plays an auxiliary but essential role in vivo by binding to the 5'-leader sequence and broadening the substrate specificity of the ribozyme. This is Ribonuclease P protein component from Rippkaea orientalis (strain PCC 8801 / RF-1) (Cyanothece sp. (strain PCC 8801)).